The chain runs to 466 residues: 3-isopropylmalate dehydratase large subunit (466 aa).

Cys-347, Cys-407, and Cys-410 together coordinate [4Fe-4S] cluster.

This sequence belongs to the aconitase/IPM isomerase family. LeuC type 1 subfamily. Heterodimer of LeuC and LeuD. [4Fe-4S] cluster serves as cofactor.

It carries out the reaction (2R,3S)-3-isopropylmalate = (2S)-2-isopropylmalate. Its pathway is amino-acid biosynthesis; L-leucine biosynthesis; L-leucine from 3-methyl-2-oxobutanoate: step 2/4. In terms of biological role, catalyzes the isomerization between 2-isopropylmalate and 3-isopropylmalate, via the formation of 2-isopropylmaleate. This chain is 3-isopropylmalate dehydratase large subunit, found in Acidiphilium cryptum (strain JF-5).